We begin with the raw amino-acid sequence, 348 residues long: Spore wall and anchoring disk complex protein EnP1 (348 aa).

Positions 1–16 (MKLLGLLISAFGAINA) are cleaved as a signal peptide. N-linked (GlcNAc...) asparagine glycans are attached at residues N47, N139, and N140. Positions 193-198 (PRHGRS) match the HBM1 motif. Positions 248 to 256 (IRKGKDKKC) match the HBM2 motif. Positions 322–327 (LKKIRG) match the HBM3 motif.

The protein resides in the spore wall. The protein localises to the spore. Its subcellular location is the perispore. Spore wall protein involved in the adhesion to host cells surface glycoaminoglycans (GAGs). Microsporidian spore adherence is an integral part of activation and host cell infection. In Encephalitozoon intestinalis (Microsporidian parasite), this protein is Spore wall and anchoring disk complex protein EnP1 (EnP1).